We begin with the raw amino-acid sequence, 655 residues long: NACHT, LRR and PYD domains-containing protein 10 (655 aa).

The region spanning 1–96 (MAMAKARKPR…VDQLSHICLH (96 aa)) is the Pyrin domain. The 318-residue stretch at 167–484 (SLVVLQGSAG…AMSYLVKEDQ (318 aa)) folds into the NACHT domain. An ATP-binding site is contributed by 173–180 (GSAGTGKT). Residues 597–609 (QSQNLFSVKSSLS) show a composition bias toward polar residues. The segment at 597 to 655 (QSQNLFSVKSSLSHGPKEEQKCPSVHGQKEGKDNIAGTQKEASTGKGRGTEETPKNTYI) is disordered. Basic and acidic residues-rich tracts occupy residues 611-629 (GPKE…EGKD) and 644-655 (RGTEETPKNTYI).

It belongs to the NLRP family. In terms of assembly, oligomerizes. Interacts with PYCARD. Also interacts with CASP1 and IL1B. Interacts with NOD1 and components of the NOD1 signaling pathway including RIPK2, NR2C2/TAK1 and IKBKG/NEMO. As to expression, highly expressed in basal and suprabasal epidermal cell layers with lower levels in dermal fibroblast cells (at protein level). Widely expressed with highest levels in heart, brain and skeletal muscle. Also expressed in liver, colon, dermis and epidermis. Little expression detected in myeloid cells or peripheral blood mononuclear cells.

It localises to the cytoplasm. Its subcellular location is the cell membrane. Its function is as follows. Inhibits autoprocessing of CASP1, CASP1-dependent IL1B secretion, PYCARD aggregation and PYCARD-mediated apoptosis but not apoptosis induced by FAS or BID. Displays anti-inflammatory activity. Required for immunity against C.albicans infection. Involved in the innate immune response by contributing to pro-inflammatory cytokine release in response to invasive bacterial infection. Contributes to T-cell-mediated inflammatory responses in the skin. Plays a role in protection against periodontitis through its involvement in induction of IL1A via ERK activation in oral epithelial cells infected with periodontal pathogens. Exhibits both ATPase and GTPase activities. The polypeptide is NACHT, LRR and PYD domains-containing protein 10 (NLRP10) (Homo sapiens (Human)).